Consider the following 223-residue polypeptide: Cytidylate kinase (223 aa).

ATP is bound at residue 10 to 18 (GPASSGKST).

This sequence belongs to the cytidylate kinase family. Type 1 subfamily.

It is found in the cytoplasm. It catalyses the reaction CMP + ATP = CDP + ADP. It carries out the reaction dCMP + ATP = dCDP + ADP. The chain is Cytidylate kinase from Streptococcus pneumoniae serotype 4 (strain ATCC BAA-334 / TIGR4).